Here is a 164-residue protein sequence, read N- to C-terminus: NADH-quinone oxidoreductase subunit I (164 aa).

2 4Fe-4S ferredoxin-type domains span residues 54–84 (LRRYPNGEERCIACKLCEAICPAQAITIEAG) and 95–124 (VRYDIDMVKCIYCGFCQEACPVDAIVEGPN). C64, C67, C70, C74, C104, C107, C110, and C114 together coordinate [4Fe-4S] cluster.

The protein belongs to the complex I 23 kDa subunit family. NDH-1 is composed of 14 different subunits. Subunits NuoA, H, J, K, L, M, N constitute the membrane sector of the complex. [4Fe-4S] cluster is required as a cofactor.

It is found in the cell inner membrane. The catalysed reaction is a quinone + NADH + 5 H(+)(in) = a quinol + NAD(+) + 4 H(+)(out). NDH-1 shuttles electrons from NADH, via FMN and iron-sulfur (Fe-S) centers, to quinones in the respiratory chain. The immediate electron acceptor for the enzyme in this species is believed to be ubiquinone. Couples the redox reaction to proton translocation (for every two electrons transferred, four hydrogen ions are translocated across the cytoplasmic membrane), and thus conserves the redox energy in a proton gradient. The polypeptide is NADH-quinone oxidoreductase subunit I (Mesorhizobium japonicum (strain LMG 29417 / CECT 9101 / MAFF 303099) (Mesorhizobium loti (strain MAFF 303099))).